The chain runs to 763 residues: Endoplasmic reticulum membrane sensor NFE2L1 (763 aa).

The chain crosses the membrane as a helical; Signal-anchor for type II membrane protein span at residues 7 to 24 (YLTEGLLQFTILLSLIGV). Positions 108 to 150 (DPEGSVSGSQPSSGLALESSSGLQDVTGPDNGVRESETEQGFS) are disordered. Residues 116 to 131 (SQPSSGLALESSSGLQ) show a composition bias toward low complexity. The segment at 180–188 (IFDYSHRQK) is cholesterol recognition/amino acid consensus (CRAC) region. Residues N338 and N350 are each glycosylated (N-linked (GlcNAc...) asparagine). The CPD stretch occupies residues 369–373 (SPEVE). The N-linked (GlcNAc...) asparagine glycan is linked to N413. 2 disordered regions span residues 460–523 (EEEF…DSET) and 585–604 (TLKKGSKEKQADFLDKQMSR). The Destruction motif signature appears at 466–470 (DSGLS). A compositionally biased stretch (low complexity) spans 466–514 (DSGLSLDSSHSPSSLSSSEGSSSSSSSSSSSSSSSASSSASSSFSEEGA). Residue S519 is modified to Phosphoserine; by CK2. The segment covering 589 to 604 (GSKEKQADFLDKQMSR) has biased composition (basic and acidic residues). Phosphoserine; by PKA is present on S590. The region spanning 645-708 (LIRDIRRRGK…RQMKQKVQSL (64 aa)) is the bZIP domain. Residues 647–666 (RDIRRRGKNKMAAQNCRKRK) form a basic motif region. A leucine-zipper region spans residues 673–687 (LERDVEDLQRDKARL). A Nuclear localization signal motif is present at residues 752 to 759 (RRQERKPK).

The protein belongs to the bZIP family. CNC subfamily. As to quaternary structure, interacts with KEAP1. Interacts (via CPD region) with FBXW7; leading to its ubiquitination and degradation. Interacts with SYVN1/HRD1; leading to its ubiquitination and degradation. Interacts (when ubiquitinated) with DDI2; leading to its cleavage. In terms of assembly, interacts (via the bZIP domain) with small MAF protein (MAFF, MAFG or MAFK); required for binding to antioxidant response elements (AREs) on DNA. Interacts (via Destruction motif) with BTRC; leading to its ubiquitination and degradation. Interacts with CEBPB; the heterodimer represses expression of DSPP during odontoblast differentiation. Interacts with MOTS-c, a peptide produced by the mitochondrially encoded 12S rRNA MT-RNR1. In terms of processing, cleaved at Leu-104 by the aspartyl protease DDI2 following retrotranslocation, releasing the protein from the endoplasmic reticulum membrane and forming the transcription factor NRF1 that translocates into the nucleus. Ubiquitination is prerequisite for cleavage by aspartyl protease DDI2. N-glycosylated in normal conditions, when it has a single-pass type II membrane protein topology, with the DNA-binding domain facing the endoplasmic reticulum lumen. Deglycosylated during retrotranslocation to the cytosolic side of the membrane, to have a single-pass type III membrane protein topology with the major part of the protein facing the cytosol. Post-translationally, ubiquitinated by the SCF(FBXW7) complex and SYVN1/HRD1, leading to its degradation by the proteasome. Ubiquitinated during retrotranslocation to the cytosolic side of the membrane: ubiquitination does not lead to degradation and is required for processing by the aspartyl protease DDI2 and subsequent release from the endoplasmic reticulum membrane. In terms of processing, phosphorylation by CK2 at Ser-519 inhibits transcription factor activity, possibly by affecting DNA-binding activity. Phosphorylation at Ser-590 is required for interaction with CEBPB. Ubiquitinated by the SCF(BTRC) complex in the nucleus, leading to its degradation by the proteasome.

It localises to the endoplasmic reticulum membrane. The protein resides in the nucleus. In terms of biological role, endoplasmic reticulum membrane sensor that translocates into the nucleus in response to various stresses to act as a transcription factor. Constitutes a precursor of the transcription factor NRF1. Able to detect various cellular stresses, such as cholesterol excess, oxidative stress or proteasome inhibition. In response to stress, it is released from the endoplasmic reticulum membrane following cleavage by the protease DDI2 and translocates into the nucleus to form the transcription factor NRF1. Acts as a key sensor of cholesterol excess: in excess cholesterol conditions, the endoplasmic reticulum membrane form of the protein directly binds cholesterol via its CRAC motif, preventing cleavage and release of the transcription factor NRF1, thereby allowing expression of genes promoting cholesterol removal, such as CD36. Involved in proteasome homeostasis: in response to proteasome inhibition, it is released from the endoplasmic reticulum membrane, translocates to the nucleus and activates expression of genes encoding proteasome subunits. Its function is as follows. CNC-type bZIP family transcription factor that translocates to the nucleus and regulates expression of target genes in response to various stresses. Heterodimerizes with small-Maf proteins (MAFF, MAFG or MAFK) and binds DNA motifs including the antioxidant response elements (AREs), which regulate expression of genes involved in oxidative stress response. Activates or represses expression of target genes, depending on the context. Plays a key role in cholesterol homeostasis by acting as a sensor of cholesterol excess: in low cholesterol conditions, translocates into the nucleus and represses expression of genes involved in defense against cholesterol excess, such as CD36. In excess cholesterol conditions, the endoplasmic reticulum membrane form of the protein directly binds cholesterol via its CRAC motif, preventing cleavage and release of the transcription factor NRF1, thereby allowing expression of genes promoting cholesterol removal. Critical for redox balance in response to oxidative stress: acts by binding the AREs motifs on promoters and mediating activation of oxidative stress response genes, such as GCLC, GCLM, GSS, MT1 and MT2. Plays an essential role during fetal liver hematopoiesis: probably has a protective function against oxidative stress and is involved in lipid homeostasis in the liver. Involved in proteasome homeostasis: in response to proteasome inhibition, mediates the 'bounce-back' of proteasome subunits by translocating into the nucleus and activating expression of genes encoding proteasome subunits. Also involved in regulating glucose flux. Together with CEBPB; represses expression of DSPP during odontoblast differentiation. In response to ascorbic acid induction, activates expression of SP7/Osterix in osteoblasts. This chain is Endoplasmic reticulum membrane sensor NFE2L1, found in Bos taurus (Bovine).